The primary structure comprises 486 residues: Probable peptidoglycan glycosyltransferase FtsW (486 aa).

The Cytoplasmic segment spans residues 1 to 50; it reads MAGAARDRAFLDHFGGAGADRPCHVEGALMNDMSRQATRLDAIGGRYDPW. The chain crosses the membrane as a helical span at residues 51–71; the sequence is LLGAAVTLASLGVVMVASSSI. Residues 72–77 are Periplasmic-facing; the sequence is ELEASP. A helical membrane pass occupies residues 78-98; it reads FYYLTRHLLFLGGGIALAFWA. The Cytoplasmic segment spans residues 99–112; that stretch reads MRTELKTIEQHNQM. The helical transmembrane segment at 113–133 threads the bilayer; that stretch reads LLLACFVLLVVVFVPGLGSTV. Over 134 to 141 the chain is Periplasmic; the sequence is NGAKRWIN. The chain crosses the membrane as a helical span at residues 142-162; the sequence is LGVSRFQVVESVKVFYIIWLA. Over 163-174 the chain is Cytoplasmic; that stretch reads SYLVRFRDEVNA. Residues 175–195 form a helical membrane-spanning segment; the sequence is TWQAMLKPVFVVGLLVGLLLL. Residues 196–199 are Periplasmic-facing; it reads QPDF. A helical transmembrane segment spans residues 200 to 220; sequence GSSMLLLSVTACMLVLGGAPI. Residues 221–222 are Cytoplasmic-facing; it reads GR. A helical membrane pass occupies residues 223–243; that stretch reads IILPILLLLPALVALVIFEPY. Over 244 to 298 the chain is Periplasmic; the sequence is RMRRVTSFMDPWVDQLGSGYQLSNALMAIGRGQWTGVGLGASVQKLNYLPESHTD. The helical transmembrane segment at 299 to 319 threads the bilayer; that stretch reads FIFSVIAEELGFVGVCGVIGL. The Cytoplasmic segment spans residues 320-342; the sequence is YALLVGRAFWLGMRCVEMKRHFS. Residues 343 to 363 traverse the membrane as a helical segment; it reads GYIAFGIGLWIAMQSFVSIGV. Residues 364 to 374 lie on the Periplasmic side of the membrane; sequence NLGILPTKGLT. The chain crosses the membrane as a helical span at residues 375-395; the sequence is LPLISSGGSSVLMTCLAMGVL. Residues 396–486 are Cytoplasmic-facing; it reads LRVSYEADRA…RVEPTFGRIA (91 aa).

It belongs to the SEDS family. FtsW subfamily.

The protein localises to the cell inner membrane. The catalysed reaction is [GlcNAc-(1-&gt;4)-Mur2Ac(oyl-L-Ala-gamma-D-Glu-L-Lys-D-Ala-D-Ala)](n)-di-trans,octa-cis-undecaprenyl diphosphate + beta-D-GlcNAc-(1-&gt;4)-Mur2Ac(oyl-L-Ala-gamma-D-Glu-L-Lys-D-Ala-D-Ala)-di-trans,octa-cis-undecaprenyl diphosphate = [GlcNAc-(1-&gt;4)-Mur2Ac(oyl-L-Ala-gamma-D-Glu-L-Lys-D-Ala-D-Ala)](n+1)-di-trans,octa-cis-undecaprenyl diphosphate + di-trans,octa-cis-undecaprenyl diphosphate + H(+). Its pathway is cell wall biogenesis; peptidoglycan biosynthesis. Peptidoglycan polymerase that is essential for cell division. This is Probable peptidoglycan glycosyltransferase FtsW from Xanthomonas oryzae pv. oryzae (strain KACC10331 / KXO85).